The sequence spans 185 residues: Ribosome-recycling factor (185 aa).

The protein belongs to the RRF family.

It is found in the cytoplasm. Functionally, responsible for the release of ribosomes from messenger RNA at the termination of protein biosynthesis. May increase the efficiency of translation by recycling ribosomes from one round of translation to another. The sequence is that of Ribosome-recycling factor from Thermotoga petrophila (strain ATCC BAA-488 / DSM 13995 / JCM 10881 / RKU-1).